The primary structure comprises 725 residues: ATP-dependent zinc metalloprotease FtsH (725 aa).

The Cytoplasmic portion of the chain corresponds to 1-11; the sequence is MDKMKKPKINW. Residues 12–32 form a helical membrane-spanning segment; sequence LLIVIVGIIAALLITVLVLLF. Over 33-160 the chain is Extracellular; it reads SPKTQPKSFD…LFGQHIVQEN (128 aa). Residues 161–181 form a helical membrane-spanning segment; it reads GFITFIKAIWFPALIAIIIFL. Residues 182–725 lie on the Cytoplasmic side of the membrane; sequence GYKAQSRAAS…EEETLAEKAE (544 aa). Position 252 to 259 (252 to 259) interacts with ATP; it reads GPPGTGKT. His-474 contributes to the Zn(2+) binding site. The active site involves Glu-475. The Zn(2+) site is built by His-478 and Asp-552. The disordered stretch occupies residues 680 to 725; sequence QVNESQEKDKQKNAQIKEDLSKMDKKDNLTKAKDKGEEETLAEKAE. The span at 684-725 shows a compositional bias: basic and acidic residues; that stretch reads SQEKDKQKNAQIKEDLSKMDKKDNLTKAKDKGEEETLAEKAE.

It in the central section; belongs to the AAA ATPase family. In the C-terminal section; belongs to the peptidase M41 family. In terms of assembly, homohexamer. Requires Zn(2+) as cofactor.

It is found in the cell membrane. Acts as a processive, ATP-dependent zinc metallopeptidase for both cytoplasmic and membrane proteins. Plays a role in the quality control of integral membrane proteins. The chain is ATP-dependent zinc metalloprotease FtsH from Mycoplasmopsis pulmonis (strain UAB CTIP) (Mycoplasma pulmonis).